A 191-amino-acid chain; its full sequence is Molybdenum cofactor guanylyltransferase (191 aa).

Residues 13 to 15 (LAG), Lys-26, Asp-72, and Asp-102 each bind GTP. Position 102 (Asp-102) interacts with Mg(2+).

The protein belongs to the MobA family. In terms of assembly, monomer. Mg(2+) serves as cofactor.

Its subcellular location is the cytoplasm. It catalyses the reaction Mo-molybdopterin + GTP + H(+) = Mo-molybdopterin guanine dinucleotide + diphosphate. In terms of biological role, transfers a GMP moiety from GTP to Mo-molybdopterin (Mo-MPT) cofactor (Moco or molybdenum cofactor) to form Mo-molybdopterin guanine dinucleotide (Mo-MGD) cofactor. The polypeptide is Molybdenum cofactor guanylyltransferase (Pseudomonas putida (Arthrobacter siderocapsulatus)).